The primary structure comprises 173 residues: Ribosome maturation factor RimM (173 aa).

A PRC barrel domain is found at 78–157 (EEEFYLADLI…VLVVPPEEVE (80 aa)). The interval 152 to 173 (PPEEVEAQEPPEKDAGGDEPSP) is disordered.

Belongs to the RimM family. Binds ribosomal protein uS19.

Its subcellular location is the cytoplasm. In terms of biological role, an accessory protein needed during the final step in the assembly of 30S ribosomal subunit, possibly for assembly of the head region. Essential for efficient processing of 16S rRNA. May be needed both before and after RbfA during the maturation of 16S rRNA. It has affinity for free ribosomal 30S subunits but not for 70S ribosomes. This chain is Ribosome maturation factor RimM, found in Beijerinckia indica subsp. indica (strain ATCC 9039 / DSM 1715 / NCIMB 8712).